The primary structure comprises 413 residues: Divalent metal cation transporter MntH (413 aa).

Transmembrane regions (helical) follow at residues 19-39 (FALM…GNFA), 49-69 (GYQL…IQLM), 94-114 (VWFY…AEFI), 122-142 (LVFG…TFLI), 155-175 (LVIG…LFFS), 196-216 (AVLL…IYLH), 240-260 (VAIA…TAAA), 287-307 (AAAL…TVVG), 323-343 (IPLL…ILAG), 349-369 (ILVM…IPLL), and 393-413 (LIVV…ALNL).

The protein belongs to the NRAMP family.

It is found in the cell inner membrane. H(+)-stimulated, divalent metal cation uptake system. In Erwinia tasmaniensis (strain DSM 17950 / CFBP 7177 / CIP 109463 / NCPPB 4357 / Et1/99), this protein is Divalent metal cation transporter MntH.